We begin with the raw amino-acid sequence, 70 residues long: uncharacterized protein (70 aa).

Residues 4-24 (VKTIAMLAMLVIVAALIYMGY) traverse the membrane as a helical segment.

It is found in the host membrane. This is an uncharacterized protein from Dryophytes versicolor (chameleon treefrog).